We begin with the raw amino-acid sequence, 460 residues long: Muscarinic acetylcholine receptor M1 (460 aa).

Over 1-22 (MNTSAPPAVSPNITVLAPGKGP) the chain is Extracellular. 2 N-linked (GlcNAc...) asparagine glycosylation sites follow: N2 and N12. Residues 23-48 (WQVAFIGITTGLLSLATVTGNLLVLI) form a helical membrane-spanning segment. Residues 49–62 (SFKVNTELKTVNNY) are Cytoplasmic-facing. Residues 63–84 (FLLSLACADLIIGTFSMNLYTT) form a helical membrane-spanning segment. Residues 85-95 (YLLMGHWALGT) lie on the Extracellular side of the membrane. Residues 96-121 (LACDLWLALDYVASNASVMNLLLISF) form a helical membrane-spanning segment. C98 and C178 are joined by a disulfide. The Cytoplasmic segment spans residues 122–142 (DRYFSVTRPLSYRAKRTPRRA). The helical transmembrane segment at 143 to 164 (ALMIGLAWLVSFVLWAPAILFW) threads the bilayer. The Extracellular portion of the chain corresponds to 165-185 (QYLVGERTVLAGQCYIQFLSQ). A helical transmembrane segment spans residues 186-209 (PIITFGTAMAAFYLPVTVMCTLYW). The Cytoplasmic portion of the chain corresponds to 210–366 (RIYRETENRA…LVKEKKAART (157 aa)). Disordered regions lie at residues 225–259 (LQGS…PGRC), 273–297 (SWKE…EEPG), and 310–351 (EAQA…QLAK). At T230 the chain carries Phosphothreonine. Residues 238 to 247 (SSSSERSQPG) show a composition bias toward low complexity. A compositionally biased stretch (basic residues) spans 328 to 343 (RPTKKGRDRAGKGQKP). A helical membrane pass occupies residues 367–390 (LSAILLAFILTWTPYNIMVLVSTF). The Extracellular segment spans residues 391–401 (CKDCVPETLWE). The helical transmembrane segment at 402–420 (LGYWLCYVNSTINPMCYAL) threads the bilayer. Topologically, residues 421–460 (CNKAFRDTFRLLLLCRWDKRRWRKIPKRPGSVHRTPSRQC) are cytoplasmic. T428 is subject to Phosphothreonine. S451 carries the phosphoserine modification. T455 is subject to Phosphothreonine. S457 carries the phosphoserine modification.

This sequence belongs to the G-protein coupled receptor 1 family. Muscarinic acetylcholine receptor subfamily. CHRM1 sub-subfamily. Interacts with GPRASP2. Interacts with TMEM147.

Its subcellular location is the cell membrane. It localises to the postsynaptic cell membrane. Functionally, the muscarinic acetylcholine receptor mediates various cellular responses, including inhibition of adenylate cyclase, breakdown of phosphoinositides and modulation of potassium channels through the action of G proteins. Primary transducing effect is Pi turnover. The protein is Muscarinic acetylcholine receptor M1 (CHRM1) of Macaca mulatta (Rhesus macaque).